The sequence spans 63 residues: Large ribosomal subunit protein bL28 (63 aa).

Belongs to the bacterial ribosomal protein bL28 family.

This chain is Large ribosomal subunit protein bL28, found in Clostridium perfringens (strain SM101 / Type A).